The primary structure comprises 194 residues: ATP-dependent Clp protease proteolytic subunit (194 aa).

The active-site Nucleophile is Ser-99. The active site involves His-124.

Belongs to the peptidase S14 family. Fourteen ClpP subunits assemble into 2 heptameric rings which stack back to back to give a disk-like structure with a central cavity, resembling the structure of eukaryotic proteasomes.

Its subcellular location is the cytoplasm. It carries out the reaction Hydrolysis of proteins to small peptides in the presence of ATP and magnesium. alpha-casein is the usual test substrate. In the absence of ATP, only oligopeptides shorter than five residues are hydrolyzed (such as succinyl-Leu-Tyr-|-NHMec, and Leu-Tyr-Leu-|-Tyr-Trp, in which cleavage of the -Tyr-|-Leu- and -Tyr-|-Trp bonds also occurs).. In terms of biological role, cleaves peptides in various proteins in a process that requires ATP hydrolysis. Has a chymotrypsin-like activity. Plays a major role in the degradation of misfolded proteins. The polypeptide is ATP-dependent Clp protease proteolytic subunit (Clostridium perfringens (strain ATCC 13124 / DSM 756 / JCM 1290 / NCIMB 6125 / NCTC 8237 / Type A)).